We begin with the raw amino-acid sequence, 366 residues long: MITLQRTPLFDVYAKYGGKTIDFGGWELPVQFSSIKEEHEAVRTAAGLFDVSHMGEVEVKGVDSLAFLQRVVTNDVSTLKVGGAQYTAMCYENGGTVDDLLIYKRGEEDYLLVINASNIEKDYEWLASHVIGDATVVNVSSEVAQLAIQGPKAEGILQKVVSEDLKEIKFFKFKNDILVDGIPALVSRTGYTGEDGFEIYCKSEDAAKLWEKLLEVGAEEGLKPCGLGARDTLRFEATLPLYGQELSKDITPVEAGIGFAVKPNKEADFFGKATLKEQKENGAPRKLVGIEVIERGIPRTHYPVFIGEEKIGEVTSGTQSPTLKKSIGLALIDVKYAAVDTEVEIEIRNKRVKAVVVPTPFYKRSK.

This sequence belongs to the GcvT family. The glycine cleavage system is composed of four proteins: P, T, L and H.

It catalyses the reaction N(6)-[(R)-S(8)-aminomethyldihydrolipoyl]-L-lysyl-[protein] + (6S)-5,6,7,8-tetrahydrofolate = N(6)-[(R)-dihydrolipoyl]-L-lysyl-[protein] + (6R)-5,10-methylene-5,6,7,8-tetrahydrofolate + NH4(+). Its function is as follows. The glycine cleavage system catalyzes the degradation of glycine. The sequence is that of Aminomethyltransferase from Bacillus cereus (strain ATCC 10987 / NRS 248).